Reading from the N-terminus, the 128-residue chain is EPIDERMAL PATTERNING FACTOR-like protein 2 (128 aa).

A signal peptide spans 1 to 28; it reads MVWSSNMSSFLLILLILNSTHFSLMANG. 3 disulfides stabilise this stretch: C60-C119, C65-C71, and C68-C121. The segment covering 79–90 has biased composition (polar residues); it reads NPQTKLHSPLTT. Residues 79 to 100 form a disordered region; it reads NPQTKLHSPLTTSSSSSSETIH.

This sequence belongs to the plant cysteine rich small secretory peptide family. Epidermal patterning factor subfamily.

Its subcellular location is the secreted. Functionally, controls stomatal patterning. This Arabidopsis thaliana (Mouse-ear cress) protein is EPIDERMAL PATTERNING FACTOR-like protein 2.